A 258-amino-acid polypeptide reads, in one-letter code: Phosphate import ATP-binding protein PstB (258 aa).

Positions 12–253 (IEVKNLNFYY…PARKETEDYI (242 aa)) constitute an ABC transporter domain. 44 to 51 (GPSGCGKS) contributes to the ATP binding site.

This sequence belongs to the ABC transporter superfamily. Phosphate importer (TC 3.A.1.7) family. In terms of assembly, the complex is composed of two ATP-binding proteins (PstB), two transmembrane proteins (PstC and PstA) and a solute-binding protein (PstS).

The protein localises to the cell inner membrane. It carries out the reaction phosphate(out) + ATP + H2O = ADP + 2 phosphate(in) + H(+). In terms of biological role, part of the ABC transporter complex PstSACB involved in phosphate import. Responsible for energy coupling to the transport system. This chain is Phosphate import ATP-binding protein PstB, found in Bordetella avium (strain 197N).